A 243-amino-acid chain; its full sequence is Biosynthetic peptidoglycan transglycosylase (243 aa).

A helical membrane pass occupies residues 22-42 (LIVLLVLALMSVLQVIVFRFV).

It belongs to the glycosyltransferase 51 family.

It is found in the cell inner membrane. The catalysed reaction is [GlcNAc-(1-&gt;4)-Mur2Ac(oyl-L-Ala-gamma-D-Glu-L-Lys-D-Ala-D-Ala)](n)-di-trans,octa-cis-undecaprenyl diphosphate + beta-D-GlcNAc-(1-&gt;4)-Mur2Ac(oyl-L-Ala-gamma-D-Glu-L-Lys-D-Ala-D-Ala)-di-trans,octa-cis-undecaprenyl diphosphate = [GlcNAc-(1-&gt;4)-Mur2Ac(oyl-L-Ala-gamma-D-Glu-L-Lys-D-Ala-D-Ala)](n+1)-di-trans,octa-cis-undecaprenyl diphosphate + di-trans,octa-cis-undecaprenyl diphosphate + H(+). Its pathway is cell wall biogenesis; peptidoglycan biosynthesis. Peptidoglycan polymerase that catalyzes glycan chain elongation from lipid-linked precursors. This Xylella fastidiosa (strain 9a5c) protein is Biosynthetic peptidoglycan transglycosylase.